The chain runs to 138 residues: Putative pre-16S rRNA nuclease (138 aa).

Belongs to the YqgF nuclease family.

It localises to the cytoplasm. Its function is as follows. Could be a nuclease involved in processing of the 5'-end of pre-16S rRNA. The polypeptide is Putative pre-16S rRNA nuclease (Klebsiella pneumoniae (strain 342)).